The sequence spans 64 residues: MSGREGGKKKPLKAPKKQSKEMDEDEMAFKQKQKEDQKAMEQLKAKAAGKGPLTGGGIKKSGKK.

Residues methionine 1–lysine 64 form a disordered region. The stretch at glutamate 21–lysine 50 forms a coiled coil. Residues methionine 27–lysine 44 are compositionally biased toward basic and acidic residues. Over residues proline 52 to lysine 64 the composition is skewed to gly residues.

The protein belongs to the TMA7 family.

This is Translation machinery-associated protein 7 (tma7) from Danio rerio (Zebrafish).